The sequence spans 592 residues: Aspartate--tRNA(Asp/Asn) ligase (592 aa).

Residue Glu-175 coordinates L-aspartate. An aspartate region spans residues 199-202 (QLFK). Residue Arg-221 participates in L-aspartate binding. Residues 221-223 (RDE) and Gln-230 contribute to the ATP site. Residue His-450 participates in L-aspartate binding. Glu-483 serves as a coordination point for ATP. Arg-490 lines the L-aspartate pocket. ATP is bound at residue 535–538 (GLDR).

Belongs to the class-II aminoacyl-tRNA synthetase family. Type 1 subfamily. Homodimer.

The protein localises to the cytoplasm. The enzyme catalyses tRNA(Asx) + L-aspartate + ATP = L-aspartyl-tRNA(Asx) + AMP + diphosphate. Functionally, aspartyl-tRNA synthetase with relaxed tRNA specificity since it is able to aspartylate not only its cognate tRNA(Asp) but also tRNA(Asn). Reaction proceeds in two steps: L-aspartate is first activated by ATP to form Asp-AMP and then transferred to the acceptor end of tRNA(Asp/Asn). This is Aspartate--tRNA(Asp/Asn) ligase from Acinetobacter baylyi (strain ATCC 33305 / BD413 / ADP1).